The sequence spans 350 residues: Protein memo-1 homolog (350 aa).

The protein belongs to the MEMO1 family. In terms of assembly, interacts with rho-1. Expressed in neuronal and non-neuronal cells in the head and tail, pharyngeal cells, spermatheca, distal tip cells, anchor cell and the intestine.

Functionally, plays a role in the oxidative stress response and the maintenance of longevity by regulating the interaction between GTPase rho-1 and oxidase bli-3. In turn, this serves to modulate bli-3 activity and the control of reactive oxygen species production. May control cell migration by relaying extracellular chemotactic signals to the microtubule cytoskeleton. In Caenorhabditis elegans, this protein is Protein memo-1 homolog.